A 102-amino-acid polypeptide reads, in one-letter code: Large ribosomal subunit protein bL21 (102 aa).

The protein belongs to the bacterial ribosomal protein bL21 family. Part of the 50S ribosomal subunit. Contacts protein L20.

In terms of biological role, this protein binds to 23S rRNA in the presence of protein L20. This chain is Large ribosomal subunit protein bL21, found in Listeria monocytogenes serotype 4b (strain F2365).